The chain runs to 1056 residues: RNA cytidine acetyltransferase (1056 aa).

286 to 295 (GRGKSAALGI) serves as a coordination point for ATP. Residues 433-446 (QNNTSGRESTQTAV) show a composition bias toward polar residues. Residues 433–463 (QNNTSGRESTQTAVVSRDNKEKDSHLHSQSR) form a disordered region. Residues 449–463 (RDNKEKDSHLHSQSR) show a composition bias toward basic and acidic residues. Residue Arg475 participates in ATP binding. Positions 566–706 (VLLPPIDPKD…VKLRDAKTLP (141 aa)) constitute an N-acetyltransferase domain. Residues 638–640 (IAT), 645–651 (ASMGYGS), and Asn739 contribute to the acetyl-CoA site. Ser1001, Ser1007, and Ser1010 each carry phosphoserine.

This sequence belongs to the RNA cytidine acetyltransferase family. NAT10 subfamily. In terms of assembly, interacts with TAN1. Associates with 90S pre-ribosomal particles.

It localises to the nucleus. The protein resides in the nucleolus. The catalysed reaction is a cytidine in 18S rRNA + acetyl-CoA + ATP + H2O = an N(4)-acetylcytidine in 18S rRNA + ADP + phosphate + CoA + H(+). It catalyses the reaction a cytidine in tRNA + acetyl-CoA + ATP + H2O = an N(4)-acetylcytidine in tRNA + ADP + phosphate + CoA + H(+). Functionally, RNA cytidine acetyltransferase with specificity toward both 18S rRNA and tRNAs. Catalyzes the formation of N(4)-acetylcytidine (ac4C) at positions 1280 and 1773 in 18S rRNA. Required for early nucleolar cleavages of precursor rRNA at sites A0, A1 and A2 during 18S rRNA synthesis. Catalyzes the formation of ac4C at position 12 in serine and leucine tRNAs. Requires the tRNA-binding adapter protein TAN1 for full tRNA acetyltransferase activity but not for 18S rRNA acetylation. The chain is RNA cytidine acetyltransferase from Saccharomyces cerevisiae (strain ATCC 204508 / S288c) (Baker's yeast).